Reading from the N-terminus, the 253-residue chain is L-cysteine S-thiosulfotransferase subunit SoxA (253 aa).

The signal sequence occupies residues 1–17; the sequence is MGKWVTIIFVLFLYAIA. Residues 44 to 129 enclose the Cytochrome c domain; it reads VYAEQGRDMF…SIATYVATLS (86 aa). C64, C67, H68, C102, C165, C168, and H169 together coordinate heme c. Substrate is bound at residue R210. C214 lines the heme c pocket. C214 (cysteine persulfide intermediate) is an active-site residue.

It belongs to the SoxA family. As to quaternary structure, heterodimer of SoxA and SoxX. The cofactor is heme c. In terms of processing, cysteine persulfide at Cys-214.

Its subcellular location is the periplasm. It carries out the reaction L-cysteinyl-[SoxY protein] + thiosulfate + 2 Fe(III)-[cytochrome c] = S-sulfosulfanyl-L-cysteinyl-[SoxY protein] + 2 Fe(II)-[cytochrome c] + 2 H(+). It catalyses the reaction S-sulfanyl-L-cysteinyl-[SoxY protein] + thiosulfate + 2 Fe(III)-[cytochrome c] = S-(2-sulfodisulfanyl)-L-cysteinyl-[SoxY protein] + 2 Fe(II)-[cytochrome c] + 2 H(+). C-type diheme cytochrome, which is part of the SoxAX cytochrome complex involved in sulfur oxidation. The SoxAX complex catalyzes the formation of a heterodisulfide bond between the conserved cysteine residue on a sulfur carrier SoxYZ complex subunit SoxY and thiosulfate or other inorganic sulfur substrates. This leads to the liberation of two electrons, which may be transferred from the SoxAX complex to another cytochrome c that then channels them into the respiratory electron transport chain. Some electrons may be used for reductive CO(2) fixation. This is L-cysteine S-thiosulfotransferase subunit SoxA from Hydrogenobacter thermophilus (strain DSM 6534 / IAM 12695 / TK-6).